We begin with the raw amino-acid sequence, 444 residues long: ATP-dependent protease ATPase subunit HslU (444 aa).

ATP contacts are provided by residues Ile18, 60–65 (GVGKTE), Asp256, Glu322, and Arg394.

This sequence belongs to the ClpX chaperone family. HslU subfamily. A double ring-shaped homohexamer of HslV is capped on each side by a ring-shaped HslU homohexamer. The assembly of the HslU/HslV complex is dependent on binding of ATP.

The protein localises to the cytoplasm. Its function is as follows. ATPase subunit of a proteasome-like degradation complex; this subunit has chaperone activity. The binding of ATP and its subsequent hydrolysis by HslU are essential for unfolding of protein substrates subsequently hydrolyzed by HslV. HslU recognizes the N-terminal part of its protein substrates and unfolds these before they are guided to HslV for hydrolysis. This Klebsiella pneumoniae subsp. pneumoniae (strain ATCC 700721 / MGH 78578) protein is ATP-dependent protease ATPase subunit HslU.